Here is a 217-residue protein sequence, read N- to C-terminus: Octanoyltransferase (217 aa).

Residues 32 to 207 (SESHDELWIV…TFSQLLGYQH (176 aa)) form the BPL/LPL catalytic domain. Substrate contacts are provided by residues 71–78 (RGGQVTYH), 138–140 (SLG), and 151–153 (GLA). The Acyl-thioester intermediate role is filled by Cys-169.

The protein belongs to the LipB family.

It is found in the cytoplasm. The enzyme catalyses octanoyl-[ACP] + L-lysyl-[protein] = N(6)-octanoyl-L-lysyl-[protein] + holo-[ACP] + H(+). It functions in the pathway protein modification; protein lipoylation via endogenous pathway; protein N(6)-(lipoyl)lysine from octanoyl-[acyl-carrier-protein]: step 1/2. Its function is as follows. Catalyzes the transfer of endogenously produced octanoic acid from octanoyl-acyl-carrier-protein onto the lipoyl domains of lipoate-dependent enzymes. Lipoyl-ACP can also act as a substrate although octanoyl-ACP is likely to be the physiological substrate. The polypeptide is Octanoyltransferase (Shewanella baltica (strain OS155 / ATCC BAA-1091)).